We begin with the raw amino-acid sequence, 703 residues long: Probable ATP-dependent RNA helicase vasa-like (703 aa).

3 disordered regions span residues 1 to 22 (MSDDWDETDAAPASDWNIESFG), 35 to 73 (NTGNAFNDGEGGFDEGSQSNFDDPFRSGGGGFGGRGRGG), and 88 to 167 (RDCP…RGCF). Residues 61–73 (SGGGGFGGRGRGG) show a composition bias toward gly residues. Residues 77 to 92 (CFKCGDEGHMARDCPS) form a CCHC-type 1 zinc finger. Residues 146–155 (FGFGSGSGSR) show a composition bias toward gly residues. 2 consecutive CCHC-type zinc fingers follow at residues 166-181 (CFKCGEEGHMSRDCPS) and 189-204 (CFKCGQEGHNARDCPN). Residues 261–289 (ESFQSMNLRPLLLENIVKAGYGCPTPVQK) carry the Q motif motif. Residues 292–475 (IPNVMNGRDI…SAFLNNYLFV (184 aa)) enclose the Helicase ATP-binding domain. ATP is bound at residue 305-312 (AQTGSGKT). The DEAD box signature appears at 419-422 (DEAD). In terms of domain architecture, Helicase C-terminal spans 506–651 (MCEEILISAD…TIPDWLTQKA (146 aa)). The segment at 676-703 (GGGRGWEKNQASSFLGGPSESNVDEEWD) is disordered.

It belongs to the DEAD box helicase family. DDX4/VASA subfamily. Expressed in ovaries and testis. Not expressed in somatic tissue of the ovaries including follicle cells, muscle and connective tissue.

Its subcellular location is the cytoplasm. The protein resides in the nucleus. It localises to the nucleolus. It carries out the reaction ATP + H2O = ADP + phosphate + H(+). Its function is as follows. Involved in translational control mechanisms operating in early stages of oogenesis. Required maternally in many stages of oogenesis, including cystocyte differentiation, oocyte differentiation, and specification of anterior-posterior polarity in the developing cysts. Essential for the formation and/or structural integrity of perinuclear nuage particles during germ cell formation. In Penaeus vannamei (Whiteleg shrimp), this protein is Probable ATP-dependent RNA helicase vasa-like.